The primary structure comprises 98 residues: DNA/RNA-binding protein Alba (98 aa).

Lys16 is modified (N6-acetyllysine).

It belongs to the histone-like Alba family. In terms of processing, acetylated. Acetylation at Lys-16 decreases DNA-binding affinity.

The protein localises to the cytoplasm. It localises to the chromosome. In terms of biological role, binds double-stranded DNA tightly but without sequence specificity. Involved in DNA compaction. This Metallosphaera sedula (strain ATCC 51363 / DSM 5348 / JCM 9185 / NBRC 15509 / TH2) protein is DNA/RNA-binding protein Alba.